The following is a 318-amino-acid chain: MQKNYRVLLYYKYTAIENPEKFKDEHLAYCKSQDLLGRILVSSEGINGTLSGTFEQTENYMDYLKSLQGFEDIFFKIDEVDAHAFSKMHVRVKKELVNLSLEDDVNPLEITGKYLEPIEFYQKLQDPNTVVIDARNDYEFDLGHFRGAIKPEIKNFRDLPDWIRENKDQFKDKEILTYCTGGVRCEKFSGWLIKEGFNVAGQLHGGIHNYGTSKDTEGKLWDGKMYVFDERIAVDINKHEHVVVGRDYFTNEPCERYINCGNPECNKQILASEASEEKYLGSCSHACRIHPNNRYVKKHNLTTDFVLQHIASNLETQI.

Residues Q125–K219 form the Rhodanese domain. The active-site Cysteine persulfide intermediate is the C179.

The protein belongs to the TrhO family.

The enzyme catalyses uridine(34) in tRNA + AH2 + O2 = 5-hydroxyuridine(34) in tRNA + A + H2O. Its function is as follows. Catalyzes oxygen-dependent 5-hydroxyuridine (ho5U) modification at position 34 in tRNAs. The protein is tRNA uridine(34) hydroxylase of Acholeplasma laidlawii (strain PG-8A).